Consider the following 336-residue polypeptide: tRNA N6-adenosine threonylcarbamoyltransferase (336 aa).

Fe cation-binding residues include His-111 and His-115. Substrate contacts are provided by residues Leu-134–Gly-138, Asp-167, Gly-180, and Asn-270. Asp-298 contacts Fe cation.

The protein belongs to the KAE1 / TsaD family. It depends on Fe(2+) as a cofactor.

Its subcellular location is the cytoplasm. It catalyses the reaction L-threonylcarbamoyladenylate + adenosine(37) in tRNA = N(6)-L-threonylcarbamoyladenosine(37) in tRNA + AMP + H(+). Its function is as follows. Required for the formation of a threonylcarbamoyl group on adenosine at position 37 (t(6)A37) in tRNAs that read codons beginning with adenine. Is involved in the transfer of the threonylcarbamoyl moiety of threonylcarbamoyl-AMP (TC-AMP) to the N6 group of A37, together with TsaE and TsaB. TsaD likely plays a direct catalytic role in this reaction. The chain is tRNA N6-adenosine threonylcarbamoyltransferase from Acinetobacter baumannii (strain AB307-0294).